Reading from the N-terminus, the 140-residue chain is Low calcium response locus protein T (140 aa).

This chain is Low calcium response locus protein T (lcrT), found in Yersinia pestis.